The following is a 456-amino-acid chain: MLNNAMSVVILAAGKGTRMYSDLPKVLHTLAGKAMVQHVIDAANELGAAHVHLVYGHGGDLLKQALKDDNLNWVLQTEQLGTGHAMQQAAPFFADDEDILMLYGDVPLISVETLQRLRDAKPQGGIGLLTVKLDDPTGYGRITRENGKVTGIVEHKDATDEQRQIQEINTGILIANGADMKRWLAKLTNNNAQGEYYITDIIALAYQEGREIVAVHPQRLSEVEGVNNRLQLSRLERVYQSEQAEKLLLAGVMLRDPARFDLRGTLTHGRDVEIDTNVIIEGNVTLGHRVKIGTGCVIKNSVIGDDCEISPYTVVEDANLAAACTIGPFARLRPGAELLEGAHVGNFVEMKKARLGKGSKAGHLTYLGDAEIGDNVNIGAGTITCNYDGANKFKTIIGDDVFVGSDTQLVAPVTVGKGATIAAGTTVTRNVGENALAISRVPQTQKEGWRRPVKKK.

The segment at 1–229 (MLNNAMSVVI…LSEVEGVNNR (229 aa)) is pyrophosphorylase. UDP-N-acetyl-alpha-D-glucosamine is bound by residues 11–14 (LAAG), Lys-25, Gln-76, 81–82 (GT), 103–105 (YGD), Gly-140, Glu-154, Asn-169, and Asn-227. A Mg(2+)-binding site is contributed by Asp-105. Mg(2+) is bound at residue Asn-227. Residues 230–250 (LQLSRLERVYQSEQAEKLLLA) are linker. Residues 251 to 456 (GVMLRDPARF…EGWRRPVKKK (206 aa)) form an N-acetyltransferase region. UDP-N-acetyl-alpha-D-glucosamine contacts are provided by Arg-333 and Lys-351. Catalysis depends on His-363, which acts as the Proton acceptor. 2 residues coordinate UDP-N-acetyl-alpha-D-glucosamine: Tyr-366 and Asn-377. Acetyl-CoA-binding positions include Ala-380, 386–387 (NY), Ser-405, Ala-423, and Arg-440.

The protein in the N-terminal section; belongs to the N-acetylglucosamine-1-phosphate uridyltransferase family. This sequence in the C-terminal section; belongs to the transferase hexapeptide repeat family. Homotrimer. Mg(2+) serves as cofactor.

It is found in the cytoplasm. It catalyses the reaction alpha-D-glucosamine 1-phosphate + acetyl-CoA = N-acetyl-alpha-D-glucosamine 1-phosphate + CoA + H(+). The enzyme catalyses N-acetyl-alpha-D-glucosamine 1-phosphate + UTP + H(+) = UDP-N-acetyl-alpha-D-glucosamine + diphosphate. It functions in the pathway nucleotide-sugar biosynthesis; UDP-N-acetyl-alpha-D-glucosamine biosynthesis; N-acetyl-alpha-D-glucosamine 1-phosphate from alpha-D-glucosamine 6-phosphate (route II): step 2/2. It participates in nucleotide-sugar biosynthesis; UDP-N-acetyl-alpha-D-glucosamine biosynthesis; UDP-N-acetyl-alpha-D-glucosamine from N-acetyl-alpha-D-glucosamine 1-phosphate: step 1/1. The protein operates within bacterial outer membrane biogenesis; LPS lipid A biosynthesis. Functionally, catalyzes the last two sequential reactions in the de novo biosynthetic pathway for UDP-N-acetylglucosamine (UDP-GlcNAc). The C-terminal domain catalyzes the transfer of acetyl group from acetyl coenzyme A to glucosamine-1-phosphate (GlcN-1-P) to produce N-acetylglucosamine-1-phosphate (GlcNAc-1-P), which is converted into UDP-GlcNAc by the transfer of uridine 5-monophosphate (from uridine 5-triphosphate), a reaction catalyzed by the N-terminal domain. The sequence is that of Bifunctional protein GlmU from Escherichia coli O45:K1 (strain S88 / ExPEC).